A 390-amino-acid polypeptide reads, in one-letter code: 4-O-beta-D-mannosyl-D-glucose phosphorylase (390 aa).

It belongs to the glycosyl hydrolase 130 family.

The enzyme catalyses 4-O-beta-D-mannopyranosyl-D-glucopyranose + phosphate = alpha-D-mannose 1-phosphate + D-glucose. Functionally, converts 4-O-beta-D-mannopyranosyl-D-glucopyranose (Man-Glc) to mannose 1-phosphate (Man1P) and glucose. Involved in a mannan catabolic pathway which feeds into glycolysis. This Bacteroides fragilis (strain ATCC 25285 / DSM 2151 / CCUG 4856 / JCM 11019 / LMG 10263 / NCTC 9343 / Onslow / VPI 2553 / EN-2) protein is 4-O-beta-D-mannosyl-D-glucose phosphorylase.